Here is a 192-residue protein sequence, read N- to C-terminus: Adenylate kinase (192 aa).

Residue 10–15 (GAGKGT) coordinates ATP. Residues 30-56 (GTGGMLRALEPESGEQIHLRIDRGHFA) form an NMP region. Residues Thr-31, Arg-36, 82–85 (GFPR), and Gln-89 each bind AMP. An LID region spans residues 123-133 (KRGETENRADD). Arg-124 is an ATP binding site. Residues Arg-130 and Arg-141 each coordinate AMP. Residue Asp-169 coordinates ATP.

Belongs to the adenylate kinase family. As to quaternary structure, monomer.

It is found in the cytoplasm. The catalysed reaction is AMP + ATP = 2 ADP. The protein operates within purine metabolism; AMP biosynthesis via salvage pathway; AMP from ADP: step 1/1. In terms of biological role, catalyzes the reversible transfer of the terminal phosphate group between ATP and AMP. Plays an important role in cellular energy homeostasis and in adenine nucleotide metabolism. The sequence is that of Adenylate kinase from Rhodopirellula baltica (strain DSM 10527 / NCIMB 13988 / SH1).